We begin with the raw amino-acid sequence, 153 residues long: UPF0260 protein YcgN (153 aa).

Belongs to the UPF0260 family.

The protein is UPF0260 protein YcgN of Shigella boydii serotype 18 (strain CDC 3083-94 / BS512).